A 209-amino-acid polypeptide reads, in one-letter code: Putative 3-methyladenine DNA glycosylase (209 aa).

The protein belongs to the DNA glycosylase MPG family.

This Lactiplantibacillus plantarum (strain ATCC BAA-793 / NCIMB 8826 / WCFS1) (Lactobacillus plantarum) protein is Putative 3-methyladenine DNA glycosylase.